The following is a 453-amino-acid chain: UDP-N-acetylmuramate--L-alanine ligase (453 aa).

Position 112–118 (112–118 (GTHGKTT)) interacts with ATP.

The protein belongs to the MurCDEF family.

The protein resides in the cytoplasm. It catalyses the reaction UDP-N-acetyl-alpha-D-muramate + L-alanine + ATP = UDP-N-acetyl-alpha-D-muramoyl-L-alanine + ADP + phosphate + H(+). It participates in cell wall biogenesis; peptidoglycan biosynthesis. Cell wall formation. This Bdellovibrio bacteriovorus (strain ATCC 15356 / DSM 50701 / NCIMB 9529 / HD100) protein is UDP-N-acetylmuramate--L-alanine ligase.